A 347-amino-acid polypeptide reads, in one-letter code: Endophilin-A3 (347 aa).

The tract at residues 1–21 (MSVAGLKKQFHKASQLFSEKI) is membrane-binding amphipathic helix. The region spanning 18–249 (SEKISGAEGT…LELRISLASK (232 aa)) is the BAR domain. The tract at residues 60–87 (PNPAYRAKLGMLNTVSKLRGQVKATGYP) is required for dimerization upon membrane association. Residues 180-201 (EEEIRQAVEKFEESKELAERSM) are a coiled coil. Residues 218–254 (FVEAALDYHRQSTEILQELQSKLELRISLASKVPKRE) form an interaction with ARC region. Residues 255–288 (FMPKPVNMSSTDANGVGPSSSSKTPGTDTPADQP) form a disordered region. Positions 261–281 (NMSSTDANGVGPSSSSKTPGT) are enriched in polar residues. One can recognise an SH3 domain in the interval 285–344 (ADQPCCRGLYDFEPENEGELGFKEGDIITLTNQIDENWYEGMLRGESGFFPINYVEVIVP).

It belongs to the endophilin family. Interacts with ARC, DNM1, SGIP1, SYNJ1 and DYDC1. Interacts with FASLG. Interacts with ATXN2. Interacts with BIN2.

The protein resides in the cytoplasm. It localises to the early endosome membrane. Implicated in endocytosis. May recruit other proteins to membranes with high curvature. This Mus musculus (Mouse) protein is Endophilin-A3 (Sh3gl3).